Here is a 347-residue protein sequence, read N- to C-terminus: NADH-ubiquinone oxidoreductase chain 2 (347 aa).

The next 11 membrane-spanning stretches (helical) occupy residues 3-23 (PPIL…VLTS), 25-45 (HWLL…PILM), 60-80 (FLTQ…NLMF), 96-116 (GLVT…FWVP), 122-142 (ISLS…LSVL), 153-173 (LLIT…LNQT), 178-198 (ILAY…TYNP), 200-220 (LMVL…MLFM), 237-257 (LPLM…LPPL), 274-294 (DMII…YFYM), and 323-343 (IILL…TPMM).

This sequence belongs to the complex I subunit 2 family. In terms of assembly, core subunit of respiratory chain NADH dehydrogenase (Complex I) which is composed of 45 different subunits. Interacts with TMEM242.

The protein resides in the mitochondrion inner membrane. It carries out the reaction a ubiquinone + NADH + 5 H(+)(in) = a ubiquinol + NAD(+) + 4 H(+)(out). Core subunit of the mitochondrial membrane respiratory chain NADH dehydrogenase (Complex I) which catalyzes electron transfer from NADH through the respiratory chain, using ubiquinone as an electron acceptor. Essential for the catalytic activity and assembly of complex I. The chain is NADH-ubiquinone oxidoreductase chain 2 from Phoca vitulina (Harbor seal).